Consider the following 183-residue polypeptide: ATP synthase subunit delta (183 aa).

The protein belongs to the ATPase delta chain family. As to quaternary structure, F-type ATPases have 2 components, F(1) - the catalytic core - and F(0) - the membrane proton channel. F(1) has five subunits: alpha(3), beta(3), gamma(1), delta(1), epsilon(1). F(0) has three main subunits: a(1), b(2) and c(10-14). The alpha and beta chains form an alternating ring which encloses part of the gamma chain. F(1) is attached to F(0) by a central stalk formed by the gamma and epsilon chains, while a peripheral stalk is formed by the delta and b chains.

The protein localises to the cell inner membrane. F(1)F(0) ATP synthase produces ATP from ADP in the presence of a proton or sodium gradient. F-type ATPases consist of two structural domains, F(1) containing the extramembraneous catalytic core and F(0) containing the membrane proton channel, linked together by a central stalk and a peripheral stalk. During catalysis, ATP synthesis in the catalytic domain of F(1) is coupled via a rotary mechanism of the central stalk subunits to proton translocation. In terms of biological role, this protein is part of the stalk that links CF(0) to CF(1). It either transmits conformational changes from CF(0) to CF(1) or is implicated in proton conduction. This Oleidesulfovibrio alaskensis (strain ATCC BAA-1058 / DSM 17464 / G20) (Desulfovibrio alaskensis) protein is ATP synthase subunit delta.